The chain runs to 353 residues: MKKTAIALVVAGLAAASVAQAAPQENTFYAGVKAGQASFHDGLRALAREYKVGYHRNSFTYGVFGGYQILNQNNLGLAVELGYDDFGRAKGREKGKTVVKHTNHGTHLSLKGSYEVLEGLDVYGKAGVALVRSDYKLYNENSSTLKKLGEHHRARASGLFAVGAEYAVLPELAVRLEYQWLTRVGKYRPQDKPNTALNYNPWIGSINAGISYRFGQGAAPVVAAPEVVSKTFSLNSDVTFAFGKANLKPQAQATLDSIYGEMSQVKSAKVAVAGYTDRIGSDAFNVKLSQERADSVANYFVAKGVAADAISATGYGKANPVTGATCDQVKGRKALIACFAPDRRVEIAVNGTK.

Residues 1-21 form the signal peptide; the sequence is MKKTAIALVVAGLAAASVAQA. The next 8 membrane-spanning stretches (beta stranded) occupy residues 27 to 37, 58 to 69, 77 to 85, 104 to 115, 120 to 128, 158 to 167, 172 to 179, and 205 to 213; these read TFYAGVKAGQA, SFTYGVFGGYQI, LAVELGYDD, HGTHLSLKGSYE, LDVYGKAGV, GLFAVGAEYA, LAVRLEYQ, and SINAGISYR. The OmpA-like domain maps to 227–353; sequence VVSKTFSLNS…RVEIAVNGTK (127 aa). Cys326 and Cys338 are joined by a disulfide.

It belongs to the outer membrane OOP (TC 1.B.6) superfamily. OmpA family. As to quaternary structure, monomer and homodimer.

The protein localises to the cell outer membrane. Functionally, with TolR probably plays a role in maintaining the position of the peptidoglycan cell wall in the periplasm. Acts as a porin with low permeability that allows slow penetration of small solutes; an internal gate slows down solute passage. Reconstitution in planar bilayers with lithium dodecyl sulfate-solublized P5 yields narrow pores (58 pS conductance) with a low probability of opening, whereas n-octyl-bD-glucopyranoside-solubilized P5 forms large pores (1.1 nS conductance) with high open probability. The large pore easily converts to the smaller pore at room temperature; at 42 degrees Celsius the smaller pore converts to the larger one. The chain is Outer membrane protein P5 from Haemophilus influenzae (strain ATCC 51907 / DSM 11121 / KW20 / Rd).